Reading from the N-terminus, the 160-residue chain is Putative pre-16S rRNA nuclease (160 aa).

The protein belongs to the YqgF nuclease family.

Its subcellular location is the cytoplasm. Its function is as follows. Could be a nuclease involved in processing of the 5'-end of pre-16S rRNA. This chain is Putative pre-16S rRNA nuclease, found in Cereibacter sphaeroides (strain ATCC 17025 / ATH 2.4.3) (Rhodobacter sphaeroides).